We begin with the raw amino-acid sequence, 282 residues long: Putative glycosyltransferase HI_0765 (282 aa).

It belongs to the glycosyltransferase 25 family.

In Haemophilus influenzae (strain ATCC 51907 / DSM 11121 / KW20 / Rd), this protein is Putative glycosyltransferase HI_0765.